A 169-amino-acid chain; its full sequence is Succinate dehydrogenase cytochrome b560 subunit, mitochondrial (169 aa).

The transit peptide at Met1–Pro29 directs the protein to the mitochondrion. Topologically, residues Leu30–Met65 are mitochondrial matrix. A helical transmembrane segment spans residues Ala66–Leu90. Over Leu91 to Pro110 the chain is Mitochondrial intermembrane. The chain crosses the membrane as a helical span at residues Ala111–Leu139. His127 serves as a coordination point for heme b. Topologically, residues Gly140–Pro146 are mitochondrial matrix. A helical membrane pass occupies residues Gln147–Ala167. Topologically, residues Ala168–Met169 are mitochondrial intermembrane.

It belongs to the cytochrome b560 family. In terms of assembly, component of complex II composed of four subunits: the flavoprotein (FP) SDHA, iron-sulfur protein (IP) SDHB, and a cytochrome b560 composed of SDHC and SDHD. Heme b is required as a cofactor.

It is found in the mitochondrion inner membrane. It participates in carbohydrate metabolism; tricarboxylic acid cycle. Functionally, membrane-anchoring subunit of succinate dehydrogenase (SDH) that is involved in complex II of the mitochondrial electron transport chain and is responsible for transferring electrons from succinate to ubiquinone (coenzyme Q). SDH also oxidizes malate to the non-canonical enol form of oxaloacetate, enol-oxaloacetate. Enol-oxaloacetate, which is a potent inhibitor of the succinate dehydrogenase activity, is further isomerized into keto-oxaloacetate. The sequence is that of Succinate dehydrogenase cytochrome b560 subunit, mitochondrial (SDHC) from Homo sapiens (Human).